A 567-amino-acid polypeptide reads, in one-letter code: Hydroxylamine reductase 2 (567 aa).

[4Fe-4S] cluster is bound by residues C5, C8, C17, and C23. The hybrid [4Fe-2O-2S] cluster site is built by H262, E286, C330, C421, C449, C474, E509, and K511. C421 bears the Cysteine persulfide mark.

It belongs to the HCP family. It depends on [4Fe-4S] cluster as a cofactor. Hybrid [4Fe-2O-2S] cluster is required as a cofactor.

It is found in the cytoplasm. It catalyses the reaction A + NH4(+) + H2O = hydroxylamine + AH2 + H(+). Catalyzes the reduction of hydroxylamine to form NH(3) and H(2)O. In Clostridium acetobutylicum (strain ATCC 824 / DSM 792 / JCM 1419 / IAM 19013 / LMG 5710 / NBRC 13948 / NRRL B-527 / VKM B-1787 / 2291 / W), this protein is Hydroxylamine reductase 2.